Here is a 147-residue protein sequence, read N- to C-terminus: Transmembrane protein 210 (147 aa).

A signal peptide spans 1–31; sequence MAPCPQPESCPAGSPLGLICLSLLLIPASAG. Residues 32–47 are Extracellular-facing; sequence TYCECSLGLSREALIA. A helical transmembrane segment spans residues 48–68; that stretch reads LIVVLAGVSASCFCALVVVAI. The Cytoplasmic segment spans residues 69-147; sequence GVFRAKGDTC…PPPPPPPLPQ (79 aa). A disordered region spans residues 128–147; sequence TMTAPLEPPPPPPPPPPLPQ. Positions 133-147 are enriched in pro residues; that stretch reads LEPPPPPPPPPPLPQ.

It localises to the membrane. The protein localises to the cytoplasmic vesicle. Its subcellular location is the secretory vesicle. The protein resides in the acrosome. The polypeptide is Transmembrane protein 210 (Tmem210) (Mus musculus (Mouse)).